A 572-amino-acid chain; its full sequence is Proline--tRNA ligase (572 aa).

The protein belongs to the class-II aminoacyl-tRNA synthetase family. ProS type 1 subfamily. In terms of assembly, homodimer.

It is found in the cytoplasm. It carries out the reaction tRNA(Pro) + L-proline + ATP = L-prolyl-tRNA(Pro) + AMP + diphosphate. In terms of biological role, catalyzes the attachment of proline to tRNA(Pro) in a two-step reaction: proline is first activated by ATP to form Pro-AMP and then transferred to the acceptor end of tRNA(Pro). As ProRS can inadvertently accommodate and process non-cognate amino acids such as alanine and cysteine, to avoid such errors it has two additional distinct editing activities against alanine. One activity is designated as 'pretransfer' editing and involves the tRNA(Pro)-independent hydrolysis of activated Ala-AMP. The other activity is designated 'posttransfer' editing and involves deacylation of mischarged Ala-tRNA(Pro). The misacylated Cys-tRNA(Pro) is not edited by ProRS. The protein is Proline--tRNA ligase of Escherichia coli (strain K12 / MC4100 / BW2952).